The following is a 227-amino-acid chain: PKHD-type hydroxylase GOX0559 (227 aa).

The Fe2OG dioxygenase domain occupies 78-178 (RVYPPLFNRY…RWASFFWSQS (101 aa)). His-96, Asp-98, and His-159 together coordinate Fe cation. Arg-169 contacts 2-oxoglutarate.

Requires Fe(2+) as cofactor. L-ascorbate is required as a cofactor.

This chain is PKHD-type hydroxylase GOX0559, found in Gluconobacter oxydans (strain 621H) (Gluconobacter suboxydans).